Reading from the N-terminus, the 80-residue chain is Putative membrane protein insertion efficiency factor (80 aa).

The interval 61 to 80 (KTGKDPVPDHFSLKRNQEGE) is disordered. Residues 62–80 (TGKDPVPDHFSLKRNQEGE) show a composition bias toward basic and acidic residues.

The protein belongs to the UPF0161 family.

The protein resides in the cell membrane. In terms of biological role, could be involved in insertion of integral membrane proteins into the membrane. The polypeptide is Putative membrane protein insertion efficiency factor (Streptococcus pneumoniae (strain 70585)).